The chain runs to 376 residues: WW domain-binding protein 4 (376 aa).

The segment at 11–42 (KFCDYCKCWIADNRPSVEFHERGKNHKENVAK) adopts a Matrin-type zinc-finger fold. Positions 94–107 (ITPVTSTIPPTSTS) are enriched in low complexity. Disordered regions lie at residues 94 to 128 (ITPVTSTIPPTSTSNQQKEKKEKKKRKKDPSKGRW), 189 to 335 (SRWE…EPKV), and 356 to 376 (FKKRRTENGKSRNLRQRGDDQ). 2 consecutive WW domains span residues 122-155 (DPSKGRWVEGITSEGYHYYYDLISGASQWEKPEG) and 163-196 (TAVKTVWVEGLSEDGFTYYYNTETGESRWEKPDD). Residues 189–198 (SRWEKPDDFI) are compositionally biased toward basic and acidic residues. Polar residues predominate over residues 203–215 (DLPSSKVNENSLG). Composition is skewed to basic and acidic residues over residues 218–229 (DESKSSDSHSDS) and 243–257 (ETEKPKIKFKEKNKN). A phosphoserine mark is found at S220, S227, and S229. Position 262 is a phosphoserine (S262). A compositionally biased stretch (basic and acidic residues) spans 298–309 (QEIKQEVESHEE). The span at 316–326 (STENEYVSTSE) shows a compositional bias: polar residues. Residues 357-375 (KKRRTENGKSRNLRQRGDD) form an interaction with SNRNP200 region. Basic and acidic residues predominate over residues 361–376 (TENGKSRNLRQRGDDQ).

Component of the spliceosome B complex. Associated with U2 snRNPs. Binds splicing factors SNRPB, SNRPC and SF1. Interacts via the WW domains with the Pro-rich domains of KHDRBS1/SAM68. Interacts via the WW domains with the Pro-rich domains of WBP11. Interacts with SNRNP200.

It localises to the nucleus. The protein localises to the nucleus speckle. Functionally, involved in pre-mRNA splicing as a component of the spliceosome. May play a role in cross-intron bridging of U1 and U2 snRNPs in the mammalian A complex. The sequence is that of WW domain-binding protein 4 (WBP4) from Homo sapiens (Human).